The chain runs to 239 residues: MKNDVISPEFDENGRPLRRIRSFVRRQGRLTKGQEHALENYWPVMGVEFSEDMLDFPALFGREAPVTLEIGFGMGASLVAMAKDRPEQDFLGIEVHSPGVGACLASAHEEGLSNLHVMCHDAVEVLHKMIPDNSLRMVQLFFPDPWHKARHNKRRIVQVPFAELVKSKLQLGGVFHMATDWEPYAEHMLEVMSSIDGYKNLSESNDYVPRPASRPVTKFEQRGHRLGHGVWDLMFERVK.

Residues glutamate 69, glutamate 94, aspartate 121, and aspartate 144 each coordinate S-adenosyl-L-methionine. The active site involves aspartate 144. Lysine 148 serves as a coordination point for substrate. Positions 150 to 155 (RHNKRR) are interaction with RNA. Substrate contacts are provided by residues aspartate 180 and 217–220 (TKFE).

The protein belongs to the class I-like SAM-binding methyltransferase superfamily. TrmB family. Monomer.

It catalyses the reaction guanosine(46) in tRNA + S-adenosyl-L-methionine = N(7)-methylguanosine(46) in tRNA + S-adenosyl-L-homocysteine. It participates in tRNA modification; N(7)-methylguanine-tRNA biosynthesis. In terms of biological role, catalyzes the formation of N(7)-methylguanine at position 46 (m7G46) in tRNA. The chain is tRNA (guanine-N(7)-)-methyltransferase from Shigella dysenteriae serotype 1 (strain Sd197).